The chain runs to 376 residues: Chaperone protein DnaJ (376 aa).

Residues 4 to 69 enclose the J domain; it reads DFYETLGVQK…QKRAAYDRFG (66 aa). Residues 133 to 211 form a CR-type zinc finger; that stretch reads GKTAQIRVPA…CAGQGRVTEE (79 aa). Zn(2+) contacts are provided by cysteine 146, cysteine 149, cysteine 163, cysteine 166, cysteine 185, cysteine 188, cysteine 199, and cysteine 202. 4 CXXCXGXG motif repeats span residues 146–153, 163–170, 185–192, and 199–206; these read CTECSGSG, CSMCHGHG, CPQCQGRG, and CPKCAGQG.

The protein belongs to the DnaJ family. In terms of assembly, homodimer. Zn(2+) is required as a cofactor.

It localises to the cytoplasm. In terms of biological role, participates actively in the response to hyperosmotic and heat shock by preventing the aggregation of stress-denatured proteins and by disaggregating proteins, also in an autonomous, DnaK-independent fashion. Unfolded proteins bind initially to DnaJ; upon interaction with the DnaJ-bound protein, DnaK hydrolyzes its bound ATP, resulting in the formation of a stable complex. GrpE releases ADP from DnaK; ATP binding to DnaK triggers the release of the substrate protein, thus completing the reaction cycle. Several rounds of ATP-dependent interactions between DnaJ, DnaK and GrpE are required for fully efficient folding. Also involved, together with DnaK and GrpE, in the DNA replication of plasmids through activation of initiation proteins. The sequence is that of Chaperone protein DnaJ from Mesorhizobium japonicum (strain LMG 29417 / CECT 9101 / MAFF 303099) (Mesorhizobium loti (strain MAFF 303099)).